Here is a 222-residue protein sequence, read N- to C-terminus: Small ribosomal subunit protein uS3 (222 aa).

One can recognise a KH type-2 domain in the interval 39–108 (IRRHIKEKLY…TISLDIKEIK (70 aa)).

This sequence belongs to the universal ribosomal protein uS3 family. In terms of assembly, part of the 30S ribosomal subunit. Forms a tight complex with proteins S10 and S14.

Functionally, binds the lower part of the 30S subunit head. Binds mRNA in the 70S ribosome, positioning it for translation. The chain is Small ribosomal subunit protein uS3 from Caldicellulosiruptor bescii (strain ATCC BAA-1888 / DSM 6725 / KCTC 15123 / Z-1320) (Anaerocellum thermophilum).